A 148-amino-acid polypeptide reads, in one-letter code: Ponticulin-like protein D (148 aa).

An N-terminal signal peptide occupies residues 1–20; the sequence is MLLNKSLLLLVAFVFAIVSA. N67 carries an N-linked (GlcNAc...) asparagine glycan. Residue D125 is the site of GPI-like-anchor amidated aspartate attachment. The propeptide at 126 to 148 is removed in mature form; it reads SSAAATMIASFSAILIALLFALL.

It belongs to the ponticulin family. In terms of processing, the GPI-like-anchor contains a phosphoceramide group, rather than a phosphatidyl group.

The protein localises to the cell membrane. The polypeptide is Ponticulin-like protein D (ponD) (Dictyostelium discoideum (Social amoeba)).